Here is a 118-residue protein sequence, read N- to C-terminus: Large ribosomal subunit protein bL20 (118 aa).

This sequence belongs to the bacterial ribosomal protein bL20 family.

Its function is as follows. Binds directly to 23S ribosomal RNA and is necessary for the in vitro assembly process of the 50S ribosomal subunit. It is not involved in the protein synthesizing functions of that subunit. This is Large ribosomal subunit protein bL20 from Parvibaculum lavamentivorans (strain DS-1 / DSM 13023 / NCIMB 13966).